The primary structure comprises 137 residues: Large-conductance mechanosensitive channel (137 aa).

2 consecutive transmembrane segments (helical) span residues 10-30 (FAMR…AAFG) and 76-96 (GVFI…FVAI).

It belongs to the MscL family. As to quaternary structure, homopentamer.

It is found in the cell inner membrane. In terms of biological role, channel that opens in response to stretch forces in the membrane lipid bilayer. May participate in the regulation of osmotic pressure changes within the cell. This is Large-conductance mechanosensitive channel from Salmonella choleraesuis (strain SC-B67).